We begin with the raw amino-acid sequence, 281 residues long: INSIG family protein (281 aa).

At M1–F93 the chain is on the cytoplasmic side. Phosphoserine is present on S28. A helical transmembrane segment spans residues F94 to L120. Over P121–P134 the chain is Lumenal. The helical transmembrane segment at P135 to P159 threads the bilayer. At L160–S170 the chain is on the cytoplasmic side. A helical membrane pass occupies residues S171–L186. Residues L187–S189 are Lumenal-facing. The helical transmembrane segment at M190 to I215 threads the bilayer. At F216–N221 the chain is on the cytoplasmic side. Residues G222–I256 form a helical membrane-spanning segment. At Q257 to L260 the chain is on the lumenal side. The chain crosses the membrane as a helical span at residues W261–F281.

This sequence belongs to the INSIG family.

It localises to the endoplasmic reticulum membrane. This chain is INSIG family protein (ins1), found in Schizosaccharomyces pombe (strain 972 / ATCC 24843) (Fission yeast).